The sequence spans 276 residues: Glutamate racemase (276 aa).

Residues 10 to 11 (DS) and 42 to 43 (YG) each bind substrate. Cys74 serves as the catalytic Proton donor/acceptor. A substrate-binding site is contributed by 75–76 (NT). The Proton donor/acceptor role is filled by Cys185. 186–187 (TH) is a binding site for substrate.

The protein belongs to the aspartate/glutamate racemases family.

It carries out the reaction L-glutamate = D-glutamate. It participates in cell wall biogenesis; peptidoglycan biosynthesis. Functionally, provides the (R)-glutamate required for cell wall biosynthesis. This is Glutamate racemase from Levilactobacillus brevis (Lactobacillus brevis).